The primary structure comprises 471 residues: Acetylcholinesterase collagenic tail peptide (471 aa).

The N-terminal stretch at Met-1–Gly-30 is a signal peptide. Residues Cys-70–Phe-86 form a PRAD region. 2 consecutive Collagen-like domains span residues Gly-118 to Pro-282 and Gly-293 to Cys-307. 2 disordered regions span residues Glu-140–Gly-205 and Lys-237–Pro-267. 2 stretches are compositionally biased toward low complexity: residues Val-155 to Ser-164 and Ala-242 to Arg-251. A run of 2 repeats spans residues Phe-388–Cys-413 and Tyr-420–Cys-443. The tract at residues Phe-388 to Cys-443 is 2 X 26 AA approximate repeats.

It belongs to the COLQ family. As to quaternary structure, the asymmetric form of AChE is a disulfide-bonded oligomer composed of a collagenic subunit (Q) and a variable number of asymmetric (T) catalytic subunits. The N-terminal of the collagenic subunit (Q) associates with the C-terminal of the catalytic subunit (T). In terms of tissue distribution, expressed in electric organs but not in muscle.

It localises to the synapse. Anchors the catalytic subunits of asymmetric AChE to the synaptic basal lamina. This Torpedo marmorata (Marbled electric ray) protein is Acetylcholinesterase collagenic tail peptide.